Reading from the N-terminus, the 240-residue chain is Axial regulator YABBY 3 (240 aa).

The C4-type zinc-finger motif lies at 30-57 (CSFCDTVLAVSVPPSSLFKTVTVRCGHC). Residues 135–156 (DHLQEMPRPPPANRPPEKRQRV) form a disordered region.

It belongs to the YABBY family. In terms of assembly, interacts with SPL/NZZ. Interacts with SPEAR2. Binds to LUG and LUH; these complexes promote adaxial cell identity in leaves as well as embryonic shoot apical meristem (SAM) initiation and postembryonic SAM maintenance. Expressed in abaxial regions of lateral aerial organ primordia leading to cotyledons, leaves, flower meristems, sepals, petals, stamen and carpels, but not in roots.

The protein localises to the nucleus. Its function is as follows. Involved in the abaxial cell fate determination during embryogenesis and organogenesis. Regulates the initiation of embryonic shoot apical meristem (SAM) development. Contributes to the repression of KNOX genes (STM, KNAT1/BP and KNAT2) to avoid ectopic meristems. Binds DNA without sequence specificity. The sequence is that of Axial regulator YABBY 3 (YAB3) from Arabidopsis thaliana (Mouse-ear cress).